A 728-amino-acid polypeptide reads, in one-letter code: 1,4-alpha-glucan branching enzyme GlgB (728 aa).

Residue aspartate 405 is the Nucleophile of the active site. Glutamate 458 acts as the Proton donor in catalysis.

The protein belongs to the glycosyl hydrolase 13 family. GlgB subfamily. In terms of assembly, monomer.

The catalysed reaction is Transfers a segment of a (1-&gt;4)-alpha-D-glucan chain to a primary hydroxy group in a similar glucan chain.. The protein operates within glycan biosynthesis; glycogen biosynthesis. Its function is as follows. Catalyzes the formation of the alpha-1,6-glucosidic linkages in glycogen by scission of a 1,4-alpha-linked oligosaccharide from growing alpha-1,4-glucan chains and the subsequent attachment of the oligosaccharide to the alpha-1,6 position. The chain is 1,4-alpha-glucan branching enzyme GlgB from Escherichia coli O157:H7.